The sequence spans 233 residues: Cytochrome c oxidase subunit 3 (233 aa).

The next 4 membrane-spanning stretches (helical) occupy residues 62 to 82 (VVLF…AYLI), 98 to 118 (LELL…FVMH), 135 to 155 (WFGI…YEYF), and 172 to 192 (VLTG…LSVL).

The protein belongs to the cytochrome c oxidase subunit 3 family.

It is found in the cell membrane. The catalysed reaction is 4 Fe(II)-[cytochrome c] + O2 + 8 H(+)(in) = 4 Fe(III)-[cytochrome c] + 2 H2O + 4 H(+)(out). The polypeptide is Cytochrome c oxidase subunit 3 (ctaE) (Synechocystis sp. (strain ATCC 27184 / PCC 6803 / Kazusa)).